The following is a 464-amino-acid chain: Leucine-rich repeat-containing protein 34 (464 aa).

A disordered region spans residues 1 to 48 (MAAQPPRPVGERSMGSSREAARAPARSPAWASTQASTPGAALAVQRES). Over residues 16–32 (SSREAARAPARSPAWAS) the composition is skewed to low complexity. LRR repeat units follow at residues 295 to 315 (SLRY…VYLA) and 323 to 345 (TLEV…LSET).

Interacts with NPM1 and NCL.

It is found in the nucleus. The protein resides in the nucleolus. It localises to the cytoplasm. In terms of biological role, highly expressed in stem cells where it may be involved in regulation of pluripotency. In embryonic stem cells (ESCs), important for normal expression of the pluripotency regulators POU5F1/OCT4 and KLF4. Also important for expression of the ectodermal marker gene NES and the endodermal marker gene GATA4. Promotes stem cell proliferation in vitro. This Homo sapiens (Human) protein is Leucine-rich repeat-containing protein 34 (LRRC34).